Here is a 396-residue protein sequence, read N- to C-terminus: Bifunctional enzyme Fae/Hps (396 aa).

Positions 1–161 (MYQIGEALIG…YEKDRGVHAI (161 aa)) are formaldehyde-activating enzyme. The active-site Proton donor is the His17. Asp19, Leu48, Lys66, Thr68, and Gln83 together coordinate substrate. The 3-hexulose-6-phosphate synthase stretch occupies residues 162–396 (MGYKITRLWD…IDQYRIMTDF (235 aa)).

The protein in the N-terminal section; belongs to the formaldehyde-activating enzyme family. It in the C-terminal section; belongs to the HPS/KGPDC family. HPS subfamily.

It carries out the reaction 5,6,7,8-tetrahydromethanopterin + formaldehyde = 5,10-methylenetetrahydromethanopterin + H2O. The catalysed reaction is D-ribulose 5-phosphate + formaldehyde = D-arabino-hex-3-ulose 6-phosphate. It participates in carbohydrate biosynthesis; D-ribose 5-phosphate biosynthesis. Functionally, catalyzes the condensation of formaldehyde with tetrahydromethanopterin (H(4)MPT) to 5,10-methylenetetrahydromethanopterin. Catalyzes the reversible formation of ribulose-5-phosphate and formaldehyde from 3-hexulose-6-phosphate. The sequence is that of Bifunctional enzyme Fae/Hps from Methanocella arvoryzae (strain DSM 22066 / NBRC 105507 / MRE50).